A 1004-amino-acid polypeptide reads, in one-letter code: NACHT, LRR and PYD domains-containing protein 9C (1004 aa).

Positions 1 to 92 constitute a Pyrin domain; it reads MVDSSSYGLL…TMAQIERRDK (92 aa). The NACHT domain maps to 143–465; the sequence is ATAVVLGTRG…KQDKDTYHPV (323 aa). 149–156 contacts ATP; the sequence is GTRGKGKT. LRR repeat units follow at residues 750–770, 779–800, 807–828, 836–857, and 864–884; these read KVKHLSLVENPLKNKGVMFLC, VLESLMLSYCCLTFIACGHLYE, HLSLLDLGSNFLEDIGVNLLCE, TLKELWLPGCYLTSECCEEISA, and NLKTLKLGNNNIQDTGVKRLC.

The protein belongs to the NLRP family. As to expression, oocyte specific.

The protein resides in the cytoplasm. In terms of biological role, may be involved in inflammation. This chain is NACHT, LRR and PYD domains-containing protein 9C (Nlrp9c), found in Mus musculus (Mouse).